A 294-amino-acid chain; its full sequence is Nucleophosmin (294 aa).

Met-1 bears the N-acetylmethionine mark. The tract at residues 1–117 (MEDSMDMDMS…PVHISGQHLV (117 aa)) is necessary for interaction with APEX1. The required for interaction with SENP3 stretch occupies residues 1–186 (MEDSMDMDMS…DDDDFDDEEA (186 aa)). Ser-4 carries the phosphoserine; by PLK1 and PLK2 modification. A Phosphoserine modification is found at Ser-10. Lys-27 is covalently cross-linked (Glycyl lysine isopeptide (Lys-Gly) (interchain with G-Cter in SUMO2)). At Lys-32 the chain carries N6-acetyllysine; alternate. A Glycyl lysine isopeptide (Lys-Gly) (interchain with G-Cter in SUMO1); alternate cross-link involves residue Lys-32. A Glycyl lysine isopeptide (Lys-Gly) (interchain with G-Cter in SUMO2); alternate cross-link involves residue Lys-32. Residue Ser-43 is modified to Phosphoserine. Tyr-67 carries the post-translational modification Phosphotyrosine. At Ser-70 the chain carries Phosphoserine. Phosphothreonine occurs at positions 75 and 95. A compositionally biased stretch (acidic residues) spans 120-132 (EEDAESEDEEEED). Positions 120 to 247 (EEDAESEDEE…PKGPSSVEDI (128 aa)) are disordered. Ser-125 is modified (phosphoserine; by CDK2). 2 positions are modified to phosphoserine: Ser-137 and Ser-139. A Glycyl lysine isopeptide (Lys-Gly) (interchain with G-Cter in SUMO2) cross-link involves residue Lys-141. Position 150 is an N6-acetyllysine; alternate (Lys-150). A Glycyl lysine isopeptide (Lys-Gly) (interchain with G-Cter in SUMO2); alternate cross-link involves residue Lys-150. Positions 152 to 157 (PQKKVK) match the Nuclear localization signal motif. Position 154 is an N6-acetyllysine (Lys-154). Residues 161–187 (DEDDDDDDEEDDDEDDDDDDFDDEEAE) show a composition bias toward acidic residues. Residues 187-215 (EEKAPVKKSIRDTPAKNAQKSNQNGKDSK) are interaction with NOP2. Over residues 188 to 200 (EKAPVKKSIRDTP) the composition is skewed to basic and acidic residues. The Nuclear localization signal motif lies at 191 to 197 (PVKKSIR). Residue Thr-199 is modified to Phosphothreonine; by CDK1, CDK2 and CDK6. A compositionally biased stretch (polar residues) spans 202–222 (KNAQKSNQNGKDSKPSSTPRS). An ADP-ribosylserine modification is found at Ser-207. Lys-212 is subject to N6-acetyllysine. Lys-215 is covalently cross-linked (Glycyl lysine isopeptide (Lys-Gly) (interchain with G-Cter in SUMO2)). Thr-219 carries the phosphothreonine; by CDK1 modification. A compositionally biased stretch (basic and acidic residues) spans 223–235 (KGQESFKKQEKTP). Residue Ser-227 is modified to Phosphoserine. Position 229 is an N6-acetyllysine (Lys-229). Lys-230 is modified (N6-acetyllysine; alternate). A Glycyl lysine isopeptide (Lys-Gly) (interchain with G-Cter in SUMO); alternate cross-link involves residue Lys-230. 2 positions are modified to phosphothreonine; by CDK1: Thr-234 and Thr-237. Ser-242 and Ser-243 each carry phosphoserine. Residues 243 to 294 (SVEDIKAKMQASIEKGGSLPKVEAKFINYVKNCFRMTDQEAIQDLWQWRKSL) are required for nucleolar localization. A Glycyl lysine isopeptide (Lys-Gly) (interchain with G-Cter in SUMO1); alternate cross-link involves residue Lys-248. Residues Lys-248 and Lys-250 each participate in a glycyl lysine isopeptide (Lys-Gly) (interchain with G-Cter in SUMO2); alternate cross-link. Lys-250 carries the N6-acetyllysine; alternate modification. Ser-254 is modified (phosphoserine). N6-acetyllysine; alternate is present on Lys-257. A Glycyl lysine isopeptide (Lys-Gly) (interchain with G-Cter in SUMO1); alternate cross-link involves residue Lys-257. Lys-257 participates in a covalent cross-link: Glycyl lysine isopeptide (Lys-Gly) (interchain with G-Cter in SUMO2); alternate. Position 257 is an N6-acetyllysine (Lys-257). At Ser-260 the chain carries Phosphoserine. Glycyl lysine isopeptide (Lys-Gly) (interchain with G-Cter in SUMO2); alternate cross-links involve residues Lys-263, Lys-267, and Lys-273. A Glycyl lysine isopeptide (Lys-Gly) (interchain with G-Cter in SUMO); alternate cross-link involves residue Lys-263. Residues Lys-267 and Lys-273 each carry the N6-acetyllysine; alternate modification. Residue Lys-267 forms a Glycyl lysine isopeptide (Lys-Gly) (interchain with G-Cter in SUMO1); alternate linkage. Residue Lys-267 is modified to N6-succinyllysine; alternate. Thr-279 carries the post-translational modification Phosphothreonine. Residue Lys-292 is modified to N6-acetyllysine.

This sequence belongs to the nucleoplasmin family. As to quaternary structure, decamer formed by two pentameric rings associated in a head-to-head fashion. Disulfide-linked dimers under certain conditions. The SWAP complex consists of NPM1, NCL, PARP1 and SWAP70. Interacts with NSUN2 and SENP3. Interacts with the methylated form of RPS10. Interacts (via N-terminal domain) with APEX1; the interaction is RNA-dependent and decreases in hydrogen peroxide-damaged cells. Interacts with isoform 1 of NEK2. Interacts with ROCK2 and BRCA2. Interacts with RPGR. Interacts with CENPW. Interacts with EIF2AK2/PKR. Interacts with CEBPA (isoform 4). Interacts with DDX31; this interaction prevents interaction between NPM1 and HDM2. Interacts with MYC; competitive with NOP53. Interacts with NOP53; the interaction is direct and competitive with MYC. Interacts with LRRC34. Interacts with RRP1B. Interacts with NPM3. Interacts with ALKBH2. Interacts with TTF1 (via C-terminal region). Interacts with NOP2. Interacts with ARID3C (via REKLES DOMAIN); the interaction mediates ARID3C nuclear shuttling. (Microbial infection) Interacts with hepatitis delta virus S-HDAg. In terms of assembly, (Microbial infection) Interacts with HTLV1 Rex protein (via N-terminal nuclear localization signal). Post-translationally, acetylated at C-terminal lysine residues, thereby increasing affinity to histones. In terms of processing, ADP-ribosylated. Phosphorylated at Ser-4 by PLK1 and PLK2. Phosphorylation at Ser-4 by PLK2 in S phase is required for centriole duplication and is sufficient to trigger centriole replication. Phosphorylation at Ser-4 by PLK1 takes place during mitosis. Phosphorylated by CDK2 at Ser-125 and Thr-199. Phosphorylation at Thr-199 may trigger initiation of centrosome duplication. Phosphorylated by CDK1 at Thr-199, Thr-219, Thr-234 and Thr-237 during cell mitosis. When these four sites are phosphorated, RNA-binding activity seem to be abolished. May be phosphorylated at Ser-70 by NEK2. The Thr-199 phosphorylated form has higher affinity for ROCK2. CDK6 triggers Thr-199 phosphorylation when complexed to Kaposi's sarcoma herpesvirus (KSHV) V-cyclin, leading to viral reactivation by reducing viral LANA levels. Post-translationally, sumoylated by ARF. In terms of processing, ubiquitinated. Ubiquitination leads to proteasomal degradation. Deubiquitinated by USP36.

Its subcellular location is the nucleus. It is found in the nucleolus. It localises to the nucleoplasm. The protein resides in the cytoplasm. The protein localises to the cytoskeleton. Its subcellular location is the microtubule organizing center. It is found in the centrosome. Involved in diverse cellular processes such as ribosome biogenesis, centrosome duplication, protein chaperoning, histone assembly, cell proliferation, and regulation of tumor suppressors p53/TP53 and ARF. Binds ribosome presumably to drive ribosome nuclear export. Associated with nucleolar ribonucleoprotein structures and bind single-stranded nucleic acids. Acts as a chaperonin for the core histones H3, H2B and H4. Stimulates APEX1 endonuclease activity on apurinic/apyrimidinic (AP) double-stranded DNA but inhibits APEX1 endonuclease activity on AP single-stranded RNA. May exert a control of APEX1 endonuclease activity within nucleoli devoted to repair AP on rDNA and the removal of oxidized rRNA molecules. In concert with BRCA2, regulates centrosome duplication. Regulates centriole duplication: phosphorylation by PLK2 is able to trigger centriole replication. Negatively regulates the activation of EIF2AK2/PKR and suppresses apoptosis through inhibition of EIF2AK2/PKR autophosphorylation. Antagonizes the inhibitory effect of ATF5 on cell proliferation and relieves ATF5-induced G2/M blockade. In complex with MYC enhances the transcription of MYC target genes. May act as chaperonin or cotransporter in the nucleolar localization of transcription termination factor TTF1. This is Nucleophosmin from Homo sapiens (Human).